We begin with the raw amino-acid sequence, 584 residues long: Dihydroxyacetone kinase 1 (584 aa).

Position 2 is an N-acetylserine (S2). A phosphoserine mark is found at S2 and S5. The DhaK domain maps to 7–353 (EVTDPVNSSL…LNAFTNAPGW (347 aa)). Residues 51–54 (GSGH), K103, and D108 each bind substrate. Catalysis depends on H220, which acts as the Tele-hemiaminal-histidine intermediate. The residue at position 365 (S365) is a Phosphoserine. The DhaL domain maps to 386-582 (DKFAEWMKSG…LCEFLKGVQS (197 aa)). ATP-binding positions include 415–418 (DGDC) and 459–460 (TS). Residue S512 is modified to Phosphoserine. Residues 514–515 (TM) and 567–569 (DPG) each bind ATP.

This sequence belongs to the dihydroxyacetone kinase (DAK) family.

The catalysed reaction is dihydroxyacetone + ATP = dihydroxyacetone phosphate + ADP + H(+). It carries out the reaction D-glyceraldehyde + ATP = D-glyceraldehyde 3-phosphate + ADP + H(+). Its pathway is polyol metabolism; glycerol fermentation; glycerone phosphate from glycerol (oxidative route): step 2/2. Functionally, catalyzes both the phosphorylation of dihydroxyacetone and of glyceraldehyde. In Saccharomyces cerevisiae (strain ATCC 204508 / S288c) (Baker's yeast), this protein is Dihydroxyacetone kinase 1 (DAK1).